We begin with the raw amino-acid sequence, 369 residues long: Chanoclavine-I aldehyde reductase fgaOx3 (369 aa).

Residues 23–25 (PMT), A58, Q100, and H169 contribute to the FMN site. Substrate-binding residues include H169 and N172. Y174 serves as the catalytic Proton donor. FMN is bound by residues G292, 316–317 (GR), and R317. A substrate-binding site is contributed by Y344.

It belongs to the NADH:flavin oxidoreductase/NADH oxidase family. Monomer. The cofactor is FMN.

It catalyses the reaction dihydrochanoclavine-I aldehyde + NADP(+) = chanoclavine-I aldehyde + NADPH + H(+). It participates in alkaloid biosynthesis; ergot alkaloid biosynthesis. Functionally, chanoclavine-I aldehyde reductase; part of the gene cluster that mediates the biosynthesis of isofumigaclavines, fungal ergot alkaloids. The tryptophan dimethylallyltransferase ifgA catalyzes the first step of ergot alkaloid biosynthesis by condensing dimethylallyl diphosphate (DMAP) and tryptophan to form 4-dimethylallyl-L-tryptophan. The second step is catalyzed by the methyltransferase ifgB that methylates 4-dimethylallyl-L-tryptophan in the presence of S-adenosyl-L-methionine, resulting in the formation of N-methyl-dimethylallyl-L-tryptophan. The catalase ifgD and the FAD-dependent oxidoreductase ifgC then transform N-methyl-dimethylallyl-L-tryptophan to chanoclavine-I which is further oxidized by ifgE in the presence of NAD(+), resulting in the formation of chanoclavine-I aldehyde. The chanoclavine-I aldehyde reductases ifgG and/or fgaOx3 reduce chanoclavine-I aldehyde to dihydrochanoclavine-I aldehyde that spontaneously dehydrates to form 6,8-dimethyl-6,7-didehydroergoline. The festuclavine dehydrogenases ifgF1 and/or ifgF2 then catalyze the reduction of 6,8-dimethyl-6,7-didehydroergoline to form festuclavine. Hydrolysis of festuclavine by a yet undetermined cytochrome P450 monooxygenase (called ifgH) then leads to the formation of isofumigaclavine B which is in turn acetylated by ifgI to isofumigaclavine A. Penicillium roqueforti has interestingly at least two sets of genes for the consumption of chanoclavine-I aldehyde on three different loci, the OYEs ifgG/fgaOx3 and the festuclavine synthase homologs ifgF1/ifgF2. The reason for the duplication of these genes is unclear, probably to ensure the conversion of chanoclavine-I aldehyde by differential gene expression under various environmental conditions. The sequence is that of Chanoclavine-I aldehyde reductase fgaOx3 from Penicillium roqueforti (strain FM164).